A 148-amino-acid chain; its full sequence is Large ribosomal subunit protein uL22c (148 aa).

This sequence belongs to the universal ribosomal protein uL22 family. In terms of assembly, part of the 50S ribosomal subunit.

It is found in the plastid. It localises to the chloroplast. Its function is as follows. This protein binds specifically to 23S rRNA. In terms of biological role, the globular domain of the protein is located near the polypeptide exit tunnel on the outside of the subunit, while an extended beta-hairpin is found that lines the wall of the exit tunnel in the center of the 70S ribosome. This Triticum aestivum (Wheat) protein is Large ribosomal subunit protein uL22c (rpl22).